A 1334-amino-acid polypeptide reads, in one-letter code: WASH complex subunit 2 (1334 aa).

The tract at residues 1–219 is sufficient for interaction with WASHC3, WASHC4 and WASHC5; required for interaction with WASHC1; sequence MNRTSPDSER…VGSDRGSIVD (219 aa). Phosphoserine occurs at positions 157, 159, 204, 205, and 209. Residues 201–213 are compositionally biased toward low complexity; the sequence is GELSSEEGSVGSD. Positions 201–471 are disordered; sequence GELSSEEGSV…SKPSKTDKVK (271 aa). Acidic residues-rich tracts occupy residues 219-232 and 249-274; these read DSED…SDED and SDEE…EDIE. Residue S284 is modified to Phosphoserine. Over residues 289–324 the composition is skewed to basic and acidic residues; that stretch reads LAARIKGDISNQRKEGQTDGKPQKTVKEKKERRTPA. At T322 the chain carries Phosphothreonine. Residues 347–594 form a sufficient for interaction with CCDC93 region; sequence SRGGLFSNGQ…QTSSLQPQSQ (248 aa). The interaction with VPS35 stretch occupies residues 348 to 1334; that stretch reads RGGLFSNGQG…DDPLNAFGSQ (987 aa). An LFa 1 motif is present at residues 358–368; that stretch reads LFDDEDESDLF. S388 is modified (phosphoserine). Short sequence motifs (LFa) lie at residues 441-457 and 476-485; these read LFDD…NNFF and IFDDDEGDLF. The span at 442 to 454 shows a compositional bias: acidic residues; that stretch reads FDDDDNDNDEDDN. A disordered region spans residues 492-650; that stretch reads LPAASVSQTH…DSGATQGQEA (159 aa). A compositionally biased stretch (polar residues) spans 513–530; sequence LPSSKNLKLVSETKTQKG. 2 short sequence motifs (LFa) span residues 531–542 and 566–577; these read LFSDEEDSEDLF and LFGDEDEEDSLF. Phosphoserine occurs at positions 533 and 538. The span at 541 to 561 shows a compositional bias: low complexity; sequence LFSSQSSSKPKSASLPSSQPP. Polar residues-rich tracts occupy residues 584 to 594 and 601 to 611; these read KQTSSLQPQSQ and EQPSKKTSALL. A phosphoserine mark is found at S613 and S614. Residues 625–639 show a composition bias toward basic and acidic residues; sequence SHTKLASDNKSKGEL. 2 consecutive short sequence motifs (LFa) follow at residues 658–670 and 686–698; these read LFED…VDLF and LFED…SSLF. A disordered region spans residues 691-837; that stretch reads AESGSSLFGL…SRPKSTGVFQ (147 aa). A phosphoserine mark is found at S723, S747, S752, S783, and S798. Positions 800 to 811 are enriched in acidic residues; sequence FDEDEDKVEDES. The span at 818 to 830 shows a compositional bias: basic and acidic residues; the sequence is DGREKGLKTDSRP. 2 consecutive short sequence motifs (LFa) follow at residues 835-843 and 852-858; these read VFQDEELLF and DPDVDLF. Disordered regions lie at residues 862–948 and 1014–1225; these read KKIR…PSSR and AQAD…SKTH. 2 positions are modified to phosphoserine: S870 and S873. The LFa 10 signature appears at 874-884; sequence LFGDDEDDDLF. Basic and acidic residues predominate over residues 894 to 906; sequence PEKKGTLKKDHPV. Over residues 908–919 the composition is skewed to polar residues; sequence LKNQDPLDSTQG. The tract at residues 932-1334 is interaction with phospholipids; sequence QDSSGLTPFK…DDPLNAFGSQ (403 aa). Positions 1023-1041 are enriched in basic residues; it reads NKSRVKVRGKRRPQTRAAR. Positions 1024 to 1042 are required for interaction with F-actin-capping protein subunit alpha (CAPZA1 or CAPZA2 or CAPZA3); sequence KSRVKVRGKRRPQTRAARR. 4 positions are modified to phosphoserine: S1049, S1067, S1084, and S1109. Short sequence motifs (LFa) lie at residues 1124-1131, 1164-1178, and 1194-1202; these read LFDSGDIF, AFPD…EDLF, and LLEDEEDLF. 3 positions are modified to phosphoserine: S1169, S1172, and S1173. A compositionally biased stretch (basic and acidic residues) spans 1203 to 1225; sequence ADPRGKKNERKPDSHQDSVSKTH. 3 short sequence motifs (LFa) span residues 1227-1233, 1255-1263, and 1283-1292; these read IFEDDIF, LFDDNIDIF, and MFDDDTDDIF. The disordered stretch occupies residues 1294–1334; it reads SGLQAKASKPKSQSAEAASEQRSEHKVASIFDDPLNAFGSQ. Residues 1297 to 1311 show a composition bias toward low complexity; the sequence is QAKASKPKSQSAEAA. The LFa 17 motif lies at 1323–1331; the sequence is IFDDPLNAF. S1333 is subject to Phosphoserine.

It belongs to the FAM21 family. In terms of assembly, component of the WASH core complex also described as WASH regulatory complex (SHRC) composed of WASHC1, WASHC2, WASHC3, WASHC4 and WASHC5; in the complex interacts (via N-terminus) directly with WASHC1. The WASH core complex associates with the F-actin-capping protein dimer (formed by CAPZA1, CAPZA2 or CAPZA3 and CAPZB) in a transient or substoichiometric manner which was initially described as WASH complex. Interacts with VPS35; mediates the association with the retromer CSC complex. Interacts with FKBP15. Interacts with CCDC93, CCDC22, VPS35L; indicative for an association of the WASH core complex with the CCC and retriever complexes. Directly interacts with TBC1D23.

The protein localises to the early endosome membrane. It is found in the cell membrane. Functionally, acts as a component of the WASH core complex that functions as a nucleation-promoting factor (NPF) at the surface of endosomes, where it recruits and activates the Arp2/3 complex to induce actin polymerization, playing a key role in the fission of tubules that serve as transport intermediates during endosome sorting. Mediates the recruitment of the WASH core complex to endosome membranes via binding to phospholipids and VPS35 of the retromer CSC. Mediates the recruitment of the F-actin-capping protein dimer to the WASH core complex probably promoting localized F-actin polymerization needed for vesicle scission. Via its C-terminus binds various phospholipids, most strongly phosphatidylinositol 4-phosphate (PtdIns-(4)P), phosphatidylinositol 5-phosphate (PtdIns-(5)P) and phosphatidylinositol 3,5-bisphosphate (PtdIns-(3,5)P2). Involved in the endosome-to-plasma membrane trafficking and recycling of SNX27-retromer-dependent cargo proteins, such as GLUT1. Required for the association of DNAJC13, ENTR1, ANKRD50 with retromer CSC subunit VPS35. Required for the endosomal recruitment of CCC and retriever complexes subunits COMMD1 and CCDC93 as well as the retrievere complex subunit VPS35L. This is WASH complex subunit 2 from Mus musculus (Mouse).